The chain runs to 525 residues: GMP synthase [glutamine-hydrolyzing] (525 aa).

The Glutamine amidotransferase type-1 domain occupies 8–207; sequence KILILDFGSQ…ALDICGCAAN (200 aa). C85 serves as the catalytic Nucleophile. Catalysis depends on residues H181 and E183. A GMPS ATP-PPase domain is found at 208 to 400; that stretch reads WKPSSIIEDA…LGLPYNMLYR (193 aa). 235-241 provides a ligand contact to ATP; the sequence is SGGVDSS.

In terms of assembly, homodimer.

It carries out the reaction XMP + L-glutamine + ATP + H2O = GMP + L-glutamate + AMP + diphosphate + 2 H(+). The protein operates within purine metabolism; GMP biosynthesis; GMP from XMP (L-Gln route): step 1/1. Functionally, catalyzes the synthesis of GMP from XMP. This is GMP synthase [glutamine-hydrolyzing] from Shewanella oneidensis (strain ATCC 700550 / JCM 31522 / CIP 106686 / LMG 19005 / NCIMB 14063 / MR-1).